A 493-amino-acid polypeptide reads, in one-letter code: NADH-quinone oxidoreductase subunit N (493 aa).

Transmembrane regions (helical) follow at residues 8–28, 34–54, 71–91, 102–122, 123–143, 157–177, 200–220, 232–252, 266–286, 294–314, 325–345, 370–390, 405–427, and 443–463; these read ALLP…AIAI, LVFW…PHAS, GLFF…LCLA, EIFV…SSAH, LAMF…MIAY, YLML…MVYG, ALAG…LVPF, PTPV…ALLL, FLCV…LLAL, LLAY…VAAG, IAFY…AISA, AAVL…VGFV, WPLV…RVVL, and PAAG…GLFP. The disordered stretch occupies residues 473–493; it reads VPQPPPTADSPQRLTATGGLP.

It belongs to the complex I subunit 2 family. As to quaternary structure, NDH-1 is composed of 14 different subunits. Subunits NuoA, H, J, K, L, M, N constitute the membrane sector of the complex.

It is found in the cell inner membrane. It catalyses the reaction a quinone + NADH + 5 H(+)(in) = a quinol + NAD(+) + 4 H(+)(out). In terms of biological role, NDH-1 shuttles electrons from NADH, via FMN and iron-sulfur (Fe-S) centers, to quinones in the respiratory chain. The immediate electron acceptor for the enzyme in this species is believed to be ubiquinone. Couples the redox reaction to proton translocation (for every two electrons transferred, four hydrogen ions are translocated across the cytoplasmic membrane), and thus conserves the redox energy in a proton gradient. In Methylococcus capsulatus (strain ATCC 33009 / NCIMB 11132 / Bath), this protein is NADH-quinone oxidoreductase subunit N.